The primary structure comprises 262 residues: MNFSGSPVQLPLLQVHLPGEVPYRTAWAWQQARLAHMIRDPQLPDGLLLLTHPAVYTLGAGADPKFLKSLSQPIGSPAIHPESPSEQEPEILRVERGGEVTYHGPGQWVGYAMLNLKRHRPDLHEYLRQLEEVVIQTLAHFGLQGERIPGLTGVWVQGRKVAAIGIKVSRWVTYHGFALNVCPDLAAFEAIVPCGIPDRPVGSLVHFCPEVTMAAVAPVLVESFCQVFGLQAQAVSLAEWLGEPRLSDKLLGESTAQTPKRK.

In terms of domain architecture, BPL/LPL catalytic spans 41-232 (PQLPDGLLLL…SFCQVFGLQA (192 aa)). Substrate contacts are provided by residues 96 to 103 (RGGEVTYH), 163 to 165 (AIG), and 176 to 178 (GFA). C194 functions as the Acyl-thioester intermediate in the catalytic mechanism.

This sequence belongs to the LipB family.

It is found in the cytoplasm. The enzyme catalyses octanoyl-[ACP] + L-lysyl-[protein] = N(6)-octanoyl-L-lysyl-[protein] + holo-[ACP] + H(+). It functions in the pathway protein modification; protein lipoylation via endogenous pathway; protein N(6)-(lipoyl)lysine from octanoyl-[acyl-carrier-protein]: step 1/2. In terms of biological role, catalyzes the transfer of endogenously produced octanoic acid from octanoyl-acyl-carrier-protein onto the lipoyl domains of lipoate-dependent enzymes. Lipoyl-ACP can also act as a substrate although octanoyl-ACP is likely to be the physiological substrate. The polypeptide is Octanoyltransferase (Synechococcus sp. (strain JA-2-3B'a(2-13)) (Cyanobacteria bacterium Yellowstone B-Prime)).